Reading from the N-terminus, the 34-residue chain is MSDIN-like toxin proprotein 5 (34 aa).

A propeptide spanning residues 1–10 (MSDINTARLP) is cleaved from the precursor. The cyclopeptide (Tyr-Pro) cross-link spans 11–20 (YVVFMSFIPP). A propeptide spanning residues 21 to 34 (CVNDDIQVVLTRGE) is cleaved from the precursor.

Belongs to the MSDIN fungal toxin family. Processed by the macrocyclase-peptidase enzyme POPB to yield a toxic cyclic decapeptide. POPB first removes 10 residues from the N-terminus. Conformational trapping of the remaining peptide forces the enzyme to release this intermediate rather than proceed to macrocyclization. The enzyme rebinds the remaining peptide in a different conformation and catalyzes macrocyclization of the N-terminal 10 residues.

Probable toxin that belongs to the MSDIN-like toxin family responsible for a large number of food poisoning cases and deaths. The chain is MSDIN-like toxin proprotein 5 from Amanita bisporigera (Destroying angel).